Consider the following 1448-residue polypeptide: DNA-directed RNA polymerase subunit beta' (1448 aa).

Zn(2+) is bound by residues C66, C68, C81, and C84. 3 residues coordinate Mg(2+): D474, D476, and D478. Zn(2+) contacts are provided by C814, C888, C895, and C898. Residues 1408-1448 (LEELQAAIGGDGESPSGDGAAGDGAPSEEDVEQIEASGSEN) form a disordered region.

It belongs to the RNA polymerase beta' chain family. In terms of assembly, the RNAP catalytic core consists of 2 alpha, 1 beta, 1 beta' and 1 omega subunit. When a sigma factor is associated with the core the holoenzyme is formed, which can initiate transcription. Mg(2+) serves as cofactor. It depends on Zn(2+) as a cofactor.

The catalysed reaction is RNA(n) + a ribonucleoside 5'-triphosphate = RNA(n+1) + diphosphate. Functionally, DNA-dependent RNA polymerase catalyzes the transcription of DNA into RNA using the four ribonucleoside triphosphates as substrates. This is DNA-directed RNA polymerase subunit beta' from Salinibacter ruber (strain DSM 13855 / M31).